Here is a 115-residue protein sequence, read N- to C-terminus: U3-lycotoxin-Ls1a (115 aa).

The N-terminal stretch at 1-20 is a signal peptide; sequence MKFVLLFGVFLVTLFSYSSA. Positions 21-44 are excised as a propeptide; it reads EMLDDFDQADEDELLSLIEKEEAR. Disulfide bonds link cysteine 48-cysteine 63, cysteine 55-cysteine 72, cysteine 62-cysteine 87, and cysteine 74-cysteine 85.

This sequence belongs to the neurotoxin 19 (CSTX) family. 01 subfamily. In terms of tissue distribution, expressed by the venom gland.

The protein resides in the secreted. The chain is U3-lycotoxin-Ls1a from Lycosa singoriensis (Wolf spider).